The chain runs to 461 residues: Photosystem II CP43 reaction center protein (461 aa).

The propeptide occupies 1–2 (ME). At T3 the chain carries N-acetylthreonine. T3 is modified (phosphothreonine). A run of 5 helical transmembrane segments spans residues 57–81 (LFEVAHFVPQKPMYEQGLILLPHLA), 122–143 (LAGPDTLEESFRFFGYTWKRKK), 166–188 (KAMYGGGVYDTWWPGGGDVRSIT), 243–263 (RPSPWVVRTFVWSGEAYLSYS), and 279–300 (WFNNTVYPSEFYGPTGPEASQA). Residue E355 coordinates [CaMn4O5] cluster. A helical transmembrane segment spans residues 435–459 (RARAAAIGFEKGIDRSREIARKLKP).

It belongs to the PsbB/PsbC family. PsbC subfamily. PSII is composed of 1 copy each of membrane proteins PsbA, PsbB, PsbC, PsbD, PsbE, PsbF, PsbH, PsbI, PsbJ, PsbK, PsbL, PsbM, PsbT, PsbY, PsbZ, Psb30/Ycf12, at least 3 peripheral proteins of the oxygen-evolving complex and a large number of cofactors. It forms dimeric complexes. It depends on Binds multiple chlorophylls and provides some of the ligands for the Ca-4Mn-5O cluster of the oxygen-evolving complex. It may also provide a ligand for a Cl- that is required for oxygen evolution. PSII binds additional chlorophylls, carotenoids and specific lipids. as a cofactor.

The protein localises to the plastid. The protein resides in the chloroplast thylakoid membrane. Its function is as follows. One of the components of the core complex of photosystem II (PSII). It binds chlorophyll and helps catalyze the primary light-induced photochemical processes of PSII. PSII is a light-driven water:plastoquinone oxidoreductase, using light energy to abstract electrons from H(2)O, generating O(2) and a proton gradient subsequently used for ATP formation. This chain is Photosystem II CP43 reaction center protein, found in Euglena gracilis.